The sequence spans 232 residues: Probable proteasome subunit alpha type-5 (232 aa).

It belongs to the peptidase T1A family. In terms of assembly, the 26S proteasome consists of a 20S proteasome core and two 19S regulatory subunits. The 20S proteasome core is composed of 28 subunits that are arranged in four stacked rings, resulting in a barrel-shaped structure. The two end rings are each formed by seven alpha subunits, and the two central rings are each formed by seven beta subunits. The catalytic chamber with the active sites is on the inside of the barrel.

The protein resides in the cytoplasm. It is found in the nucleus. Its function is as follows. The proteasome degrades poly-ubiquitinated proteins in the cytoplasm and in the nucleus. It is essential for the regulated turnover of proteins and for the removal of misfolded proteins. The proteasome is a multicatalytic proteinase complex that is characterized by its ability to cleave peptides with Arg, Phe, Tyr, Leu, and Glu adjacent to the leaving group at neutral or slightly basic pH. It has an ATP-dependent proteolytic activity. The sequence is that of Probable proteasome subunit alpha type-5 (PUP2) from Encephalitozoon cuniculi (strain GB-M1) (Microsporidian parasite).